Consider the following 215-residue polypeptide: 3-demethoxyubiquinol 3-hydroxylase (215 aa).

Glu-64, Glu-94, His-97, Glu-146, Glu-178, and His-181 together coordinate Fe cation.

Belongs to the COQ7 family. It depends on Fe cation as a cofactor.

Its subcellular location is the cell membrane. It carries out the reaction a 5-methoxy-2-methyl-3-(all-trans-polyprenyl)benzene-1,4-diol + AH2 + O2 = a 3-demethylubiquinol + A + H2O. Its pathway is cofactor biosynthesis; ubiquinone biosynthesis. Functionally, catalyzes the hydroxylation of 2-nonaprenyl-3-methyl-6-methoxy-1,4-benzoquinol during ubiquinone biosynthesis. The polypeptide is 3-demethoxyubiquinol 3-hydroxylase (Pseudomonas savastanoi pv. phaseolicola (strain 1448A / Race 6) (Pseudomonas syringae pv. phaseolicola (strain 1448A / Race 6))).